Reading from the N-terminus, the 433-residue chain is Homoserine dehydrogenase (433 aa).

3 residues coordinate NADPH: threonine 12, valine 13, and lysine 102. Valine 13 is an NAD(+) binding site. 2 residues coordinate NADP(+): valine 13 and lysine 102. Na(+) is bound by residues glutamate 126, valine 129, glycine 131, and isoleucine 133. Glycine 184 and glutamate 187 together coordinate NADP(+). L-homoserine contacts are provided by glutamate 187 and aspartate 198. Lysine 202 functions as the Proton donor in the catalytic mechanism. Glycine 303 provides a ligand contact to NADPH. Glycine 303 is an NAD(+) binding site. Glycine 303 serves as a coordination point for NADP(+). An ACT domain is found at 356–433; that stretch reads YCRFLCADVP…EIPSVIRVLS (78 aa).

Belongs to the homoserine dehydrogenase family. The cofactor is a metal cation.

The catalysed reaction is L-homoserine + NADP(+) = L-aspartate 4-semialdehyde + NADPH + H(+). It catalyses the reaction L-homoserine + NAD(+) = L-aspartate 4-semialdehyde + NADH + H(+). The protein operates within amino-acid biosynthesis; L-methionine biosynthesis via de novo pathway; L-homoserine from L-aspartate: step 3/3. Its pathway is amino-acid biosynthesis; L-threonine biosynthesis; L-threonine from L-aspartate: step 3/5. Its function is as follows. Catalyzes the conversion of L-aspartate-beta-semialdehyde (L-Asa) to L-homoserine (L-Hse), the third step in the biosynthesis of threonine and methionine from aspartate. The chain is Homoserine dehydrogenase (hom) from Synechocystis sp. (strain ATCC 27184 / PCC 6803 / Kazusa).